The sequence spans 482 residues: Kynurenine 3-monooxygenase (482 aa).

Belongs to the aromatic-ring hydroxylase family. KMO subfamily. The cofactor is FAD.

It localises to the mitochondrion outer membrane. The enzyme catalyses L-kynurenine + NADPH + O2 + H(+) = 3-hydroxy-L-kynurenine + NADP(+) + H2O. Its pathway is cofactor biosynthesis; NAD(+) biosynthesis; quinolinate from L-kynurenine: step 1/3. Its function is as follows. Catalyzes the hydroxylation of L-kynurenine (L-Kyn) to form 3-hydroxy-L-kynurenine (L-3OHKyn). Required for synthesis of quinolinic acid. This chain is Kynurenine 3-monooxygenase, found in Phaeosphaeria nodorum (strain SN15 / ATCC MYA-4574 / FGSC 10173) (Glume blotch fungus).